We begin with the raw amino-acid sequence, 268 residues long: Mediator of RNA polymerase II transcription subunit 18 (268 aa).

Belongs to the Mediator complex subunit 18 family. As to quaternary structure, component of the Mediator complex.

The protein resides in the nucleus. Functionally, component of the Mediator complex, a coactivator involved in the regulated transcription of nearly all RNA polymerase II-dependent genes. Mediator functions as a bridge to convey information from gene-specific regulatory proteins to the basal RNA polymerase II transcription machinery. Mediator is recruited to promoters by direct interactions with regulatory proteins and serves as a scaffold for the assembly of a functional preinitiation complex with RNA polymerase II and the general transcription factors. The sequence is that of Mediator of RNA polymerase II transcription subunit 18 (srb5) from Neosartorya fischeri (strain ATCC 1020 / DSM 3700 / CBS 544.65 / FGSC A1164 / JCM 1740 / NRRL 181 / WB 181) (Aspergillus fischerianus).